We begin with the raw amino-acid sequence, 199 residues long: Phosphoheptose isomerase (199 aa).

One can recognise an SIS domain in the interval 36 to 198 (MAQCLLNEHK…DRKLIPSSED (163 aa)). 51–53 (NGG) contacts substrate. Residues H60 and E64 each contribute to the Zn(2+) site. Residues E64, 93-94 (ND), 119-121 (STS), S124, and Q174 contribute to the substrate site. Residues Q174 and H182 each contribute to the Zn(2+) site.

The protein belongs to the SIS family. GmhA subfamily. In terms of assembly, homotetramer. Zn(2+) is required as a cofactor.

The protein resides in the cytoplasm. It catalyses the reaction 2 D-sedoheptulose 7-phosphate = D-glycero-alpha-D-manno-heptose 7-phosphate + D-glycero-beta-D-manno-heptose 7-phosphate. It functions in the pathway carbohydrate biosynthesis; D-glycero-D-manno-heptose 7-phosphate biosynthesis; D-glycero-alpha-D-manno-heptose 7-phosphate and D-glycero-beta-D-manno-heptose 7-phosphate from sedoheptulose 7-phosphate: step 1/1. Catalyzes the isomerization of sedoheptulose 7-phosphate in D-glycero-D-manno-heptose 7-phosphate. The protein is Phosphoheptose isomerase of Coxiella burnetii (strain CbuK_Q154) (Coxiella burnetii (strain Q154)).